Consider the following 173-residue polypeptide: ATP synthase subunit b (173 aa).

Residues 15 to 35 (LYVGDMLFYAILFIVLMALIA) form a helical membrane-spanning segment.

It belongs to the ATPase B chain family. In terms of assembly, F-type ATPases have 2 components, F(1) - the catalytic core - and F(0) - the membrane proton channel. F(1) has five subunits: alpha(3), beta(3), gamma(1), delta(1), epsilon(1). F(0) has three main subunits: a(1), b(2) and c(10-14). The alpha and beta chains form an alternating ring which encloses part of the gamma chain. F(1) is attached to F(0) by a central stalk formed by the gamma and epsilon chains, while a peripheral stalk is formed by the delta and b chains.

It is found in the cell membrane. F(1)F(0) ATP synthase produces ATP from ADP in the presence of a proton or sodium gradient. F-type ATPases consist of two structural domains, F(1) containing the extramembraneous catalytic core and F(0) containing the membrane proton channel, linked together by a central stalk and a peripheral stalk. During catalysis, ATP synthesis in the catalytic domain of F(1) is coupled via a rotary mechanism of the central stalk subunits to proton translocation. Its function is as follows. Component of the F(0) channel, it forms part of the peripheral stalk, linking F(1) to F(0). This Pediococcus pentosaceus (strain ATCC 25745 / CCUG 21536 / LMG 10740 / 183-1w) protein is ATP synthase subunit b.